We begin with the raw amino-acid sequence, 289 residues long: Oxaloacetate decarboxylase (289 aa).

Ser47 provides a ligand contact to substrate. Asp85 lines the Mg(2+) pocket. Substrate contacts are provided by Arg156 and His232.

It belongs to the isocitrate lyase/PEP mutase superfamily. Oxaloacetate decarboxylase family. As to quaternary structure, homotetramer; dimer of dimers. It depends on Mg(2+) as a cofactor.

It carries out the reaction oxaloacetate + H(+) = pyruvate + CO2. Functionally, catalyzes the decarboxylation of oxaloacetate into pyruvate. Seems to play a role in maintaining cellular concentrations of bicarbonate and pyruvate. The polypeptide is Oxaloacetate decarboxylase (Rhodopseudomonas palustris (strain BisA53)).